A 228-amino-acid chain; its full sequence is Cytochrome b6-f complex iron-sulfur subunit 1, chloroplastic (228 aa).

Residues 1–49 (MASSTLSPVTQLCSSKSGLSSVSQCLLVKPMKINSHGLGKDKRMKVKCM) constitute a chloroplast transit peptide. The helical transmembrane segment at 72–92 (LLGALSLPTAGMLVPYGTFFV) threads the bilayer. The region spanning 115 to 211 (ASEWLKTHPP…ADIDDGKVVF (97 aa)) is the Rieske domain. [2Fe-2S] cluster contacts are provided by C157, H159, C175, and H178. C162 and C177 form a disulfide bridge.

Belongs to the Rieske iron-sulfur protein family. As to quaternary structure, the 4 large subunits of the cytochrome b6-f complex are cytochrome b6, subunit IV (17 kDa polypeptide, petD), cytochrome f and the Rieske protein, while the 4 small subunits are petG, petL, petM and petN. The complex functions as a dimer. It depends on [2Fe-2S] cluster as a cofactor.

Its subcellular location is the plastid. It is found in the chloroplast thylakoid membrane. It carries out the reaction 2 oxidized [plastocyanin] + a plastoquinol + 2 H(+)(in) = 2 reduced [plastocyanin] + a plastoquinone + 4 H(+)(out). Functionally, component of the cytochrome b6-f complex, which mediates electron transfer between photosystem II (PSII) and photosystem I (PSI), cyclic electron flow around PSI, and state transitions. This chain is Cytochrome b6-f complex iron-sulfur subunit 1, chloroplastic (petC1), found in Nicotiana tabacum (Common tobacco).